The primary structure comprises 285 residues: tRNA uridine(34) hydroxylase (285 aa).

One can recognise a Rhodanese domain in the interval 130–225 (RGDDVVFFDG…YGEAFGDTGL (96 aa)). Residue Cys185 is the Cysteine persulfide intermediate of the active site.

This sequence belongs to the TrhO family.

It carries out the reaction uridine(34) in tRNA + AH2 + O2 = 5-hydroxyuridine(34) in tRNA + A + H2O. Its function is as follows. Catalyzes oxygen-dependent 5-hydroxyuridine (ho5U) modification at position 34 in tRNAs. The protein is tRNA uridine(34) hydroxylase of Rhodococcus jostii (strain RHA1).